A 142-amino-acid polypeptide reads, in one-letter code: Transcriptional regulator MraZ (142 aa).

SpoVT-AbrB domains lie at Ala-5 to Val-51 and Ala-77 to Arg-120.

Belongs to the MraZ family. Forms oligomers.

It localises to the cytoplasm. Its subcellular location is the nucleoid. The chain is Transcriptional regulator MraZ from Herminiimonas arsenicoxydans.